We begin with the raw amino-acid sequence, 608 residues long: 1-deoxy-D-xylulose-5-phosphate synthase (608 aa).

Thiamine diphosphate is bound by residues H66 and 107–109 (GHA). D138 provides a ligand contact to Mg(2+). Thiamine diphosphate-binding positions include 139–140 (GA), N167, F277, and E350. N167 is a binding site for Mg(2+).

The protein belongs to the transketolase family. DXPS subfamily. In terms of assembly, homodimer. Mg(2+) is required as a cofactor. Thiamine diphosphate serves as cofactor.

It carries out the reaction D-glyceraldehyde 3-phosphate + pyruvate + H(+) = 1-deoxy-D-xylulose 5-phosphate + CO2. Its pathway is metabolic intermediate biosynthesis; 1-deoxy-D-xylulose 5-phosphate biosynthesis; 1-deoxy-D-xylulose 5-phosphate from D-glyceraldehyde 3-phosphate and pyruvate: step 1/1. Functionally, catalyzes the acyloin condensation reaction between C atoms 2 and 3 of pyruvate and glyceraldehyde 3-phosphate to yield 1-deoxy-D-xylulose-5-phosphate (DXP). The sequence is that of 1-deoxy-D-xylulose-5-phosphate synthase from Thermotoga petrophila (strain ATCC BAA-488 / DSM 13995 / JCM 10881 / RKU-1).